The sequence spans 682 residues: Transcription activator of gluconeogenesis PODANS_4_8760 (682 aa).

The disordered stretch occupies residues 1–72; sequence MPEDGGPFGS…KDPLRPRRKK (72 aa). Residues 9-21 show a composition bias toward low complexity; the sequence is GSEAAEASGAMSE. Basic and acidic residues-rich tracts occupy residues 29 to 41 and 54 to 67; these read HEPH…DRMS and GEVK…DPLR. Residues 77–105 constitute a DNA-binding region (zn(2)-C6 fungal-type); sequence CYACQRAHLTCGDERPCQRCIKRGLQDSC. 5 disordered regions span residues 122–148, 181–211, 325–375, 509–541, and 586–622; these read EALR…RHHS, LTES…SGMV, PAGP…RPSK, NRNT…AASG, and TDKP…HSIL. Polar residues-rich tracts occupy residues 185–206, 329–345, and 354–373; these read LPFN…SNPP, TSLQ…QPTT, and PTMS…NSRP.

It belongs to the ERT1/acuK family.

It localises to the nucleus. Transcription factor which regulates nonfermentable carbon utilization. Activator of gluconeogenetic genes. This Podospora anserina (strain S / ATCC MYA-4624 / DSM 980 / FGSC 10383) (Pleurage anserina) protein is Transcription activator of gluconeogenesis PODANS_4_8760.